The chain runs to 472 residues: Ribulose bisphosphate carboxylase large chain (472 aa).

Residues asparagine 120 and threonine 170 each contribute to the substrate site. The active-site Proton acceptor is lysine 172. Lysine 174 is a binding site for substrate. Residues lysine 198, aspartate 200, and glutamate 201 each contribute to the Mg(2+) site. The residue at position 198 (lysine 198) is an N6-carboxylysine. Residue histidine 291 is the Proton acceptor of the active site. Substrate-binding residues include arginine 292, histidine 324, and serine 376. The Interacts with RbcX2 motif lies at 461–467 (EIKFEFE).

This sequence belongs to the RuBisCO large chain family. Type I subfamily. In terms of assembly, heterohexadecamer of 8 large chains and 8 small chains; disulfide-linked. The disulfide link is formed within the large subunit homodimers. The exposed C-terminus binds in a cleft in the RbcX2 (shown with endogenous and Anabaena strain CA protein). RbcX2 is displaced by RbcS; as RbcX2 is removed RbcS mediates the ordering of an internal RbcL loop (Thr-64-Leu-70) in a catalytically active conformation. Mg(2+) is required as a cofactor. Post-translationally, the disulfide bond which can form in the large chain dimeric partners within the hexadecamer appears to be associated with oxidative stress and protein turnover.

Its subcellular location is the carboxysome. It carries out the reaction 2 (2R)-3-phosphoglycerate + 2 H(+) = D-ribulose 1,5-bisphosphate + CO2 + H2O. The catalysed reaction is D-ribulose 1,5-bisphosphate + O2 = 2-phosphoglycolate + (2R)-3-phosphoglycerate + 2 H(+). Functionally, ruBisCO catalyzes two reactions: the carboxylation of D-ribulose 1,5-bisphosphate, the primary event in carbon dioxide fixation, as well as the oxidative fragmentation of the pentose substrate in the photorespiration process. Both reactions occur simultaneously and in competition at the same active site. This is Ribulose bisphosphate carboxylase large chain (cbbL) from Synechococcus sp. (strain ATCC 27144 / PCC 6301 / SAUG 1402/1) (Anacystis nidulans).